We begin with the raw amino-acid sequence, 103 residues long: MTGRTVTRADLASAVCRKVGLSYTESAALVELILSEISDSLVKGEMVKLSCFATFQVRSKSRRIGRNPKTGIEAPIPPRRVVTFKAANILKQRILDVHCAKQK.

This sequence belongs to the bacterial histone-like protein family. In terms of assembly, heterodimer of an alpha and a beta chain.

Functionally, this protein is one of the two subunits of integration host factor, a specific DNA-binding protein that functions in genetic recombination as well as in transcriptional and translational control. The chain is Integration host factor subunit alpha from Bartonella bacilliformis (strain ATCC 35685 / KC583 / Herrer 020/F12,63).